The chain runs to 1028 residues: Carbamoyl phosphate synthase large chain (1028 aa).

The interval 1–409 (MPPRRDLKKI…ALMKALRGLE (409 aa)) is carboxyphosphate synthetic domain. ATP is bound by residues Arg129, Arg169, Gly175, Gly176, Glu208, Val210, Glu215, Gly241, Val242, His243, Gln285, and Glu299. The 196-residue stretch at 133–328 (QEAMRRIDLE…IAKIAALLAV (196 aa)) folds into the ATP-grasp 1 domain. Mg(2+)-binding residues include Gln285, Glu299, and Asn301. Gln285, Glu299, and Asn301 together coordinate Mn(2+). Residues 410–549 (RDVRALAGVR…YSTYELEDEV (140 aa)) are oligomerization domain. The tract at residues 550–933 (WPSQKPKVVI…AYYKAELGAG (384 aa)) is carbamoyl phosphate synthetic domain. The ATP-grasp 2 domain occupies 674-866 (HALCQRLGIP…LAKLAALIAV (193 aa)). The ATP site is built by Arg710, Arg750, Leu752, Glu757, Gly782, Val783, His784, Ser785, Gln825, and Glu837. Gln825, Glu837, and Asn839 together coordinate Mg(2+). Residues Gln825, Glu837, and Asn839 each contribute to the Mn(2+) site. The MGS-like domain occupies 934–1028 (QRLPLSGQVR…QDWHQKAPRG (95 aa)). An allosteric domain region spans residues 934-1028 (QRLPLSGQVR…QDWHQKAPRG (95 aa)).

This sequence belongs to the CarB family. Composed of two chains; the small (or glutamine) chain promotes the hydrolysis of glutamine to ammonia, which is used by the large (or ammonia) chain to synthesize carbamoyl phosphate. Tetramer of heterodimers (alpha,beta)4. Mg(2+) serves as cofactor. It depends on Mn(2+) as a cofactor.

The catalysed reaction is hydrogencarbonate + L-glutamine + 2 ATP + H2O = carbamoyl phosphate + L-glutamate + 2 ADP + phosphate + 2 H(+). The enzyme catalyses hydrogencarbonate + NH4(+) + 2 ATP = carbamoyl phosphate + 2 ADP + phosphate + 2 H(+). It functions in the pathway amino-acid biosynthesis; L-arginine biosynthesis; carbamoyl phosphate from bicarbonate: step 1/1. It participates in pyrimidine metabolism; UMP biosynthesis via de novo pathway; (S)-dihydroorotate from bicarbonate: step 1/3. Its function is as follows. Large subunit of the glutamine-dependent carbamoyl phosphate synthetase (CPSase). CPSase catalyzes the formation of carbamoyl phosphate from the ammonia moiety of glutamine, carbonate, and phosphate donated by ATP, constituting the first step of 2 biosynthetic pathways, one leading to arginine and/or urea and the other to pyrimidine nucleotides. The large subunit (synthetase) binds the substrates ammonia (free or transferred from glutamine from the small subunit), hydrogencarbonate and ATP and carries out an ATP-coupled ligase reaction, activating hydrogencarbonate by forming carboxy phosphate which reacts with ammonia to form carbamoyl phosphate. The sequence is that of Carbamoyl phosphate synthase large chain from Thermus thermophilus (strain ATCC BAA-163 / DSM 7039 / HB27).